The following is a 209-amino-acid chain: Cilia- and flagella-associated protein 418 (209 aa).

The segment at 1–76 (MAKDLDELLD…LINEIFEEPD (76 aa)) is required for interaction with FAM161A. A disordered region spans residues 24–58 (LDLGERPKGDGGGGSHSGDRNGAQEKETLRSTETF). A compositionally biased stretch (basic and acidic residues) spans 40-58 (SGDRNGAQEKETLRSTETF).

Interacts (via N-terminus) with FAM161A (via central region); the interaction is direct. In terms of tissue distribution, expressed in multiple tissues, including the brain, kidney, lung, spleen, heart, trachea and testis. Expressed in the retina (at protein level).

It is found in the cytoplasm. The protein resides in the photoreceptor inner segment. Functionally, may be involved in photoreceptor outer segment disk morphogenesis. The chain is Cilia- and flagella-associated protein 418 from Mus musculus (Mouse).